Consider the following 227-residue polypeptide: Cytochrome c oxidase subunit 2 (227 aa).

At 1 to 14 the chain is on the mitochondrial intermembrane side; sequence MAYPLQMGLQDATS. The chain crosses the membrane as a helical span at residues 15 to 45; it reads PIMEELLHFHDHTLMIVFLISSLVLYIISLM. Topologically, residues 46-59 are mitochondrial matrix; sequence LTTKLTHTSTMDAQ. Residues 60 to 87 form a helical membrane-spanning segment; sequence EVETVWTILPAIILILIALPSLRILYMM. Topologically, residues 88–227 are mitochondrial intermembrane; sequence DEINNPSLTV…HFEKWSTSML (140 aa). 6 residues coordinate Cu cation: His161, Cys196, Glu198, Cys200, His204, and Met207. Glu198 provides a ligand contact to Mg(2+).

The protein belongs to the cytochrome c oxidase subunit 2 family. In terms of assembly, component of the cytochrome c oxidase (complex IV, CIV), a multisubunit enzyme composed of 14 subunits. The complex is composed of a catalytic core of 3 subunits MT-CO1, MT-CO2 and MT-CO3, encoded in the mitochondrial DNA, and 11 supernumerary subunits COX4I, COX5A, COX5B, COX6A, COX6B, COX6C, COX7A, COX7B, COX7C, COX8 and NDUFA4, which are encoded in the nuclear genome. The complex exists as a monomer or a dimer and forms supercomplexes (SCs) in the inner mitochondrial membrane with NADH-ubiquinone oxidoreductase (complex I, CI) and ubiquinol-cytochrome c oxidoreductase (cytochrome b-c1 complex, complex III, CIII), resulting in different assemblies (supercomplex SCI(1)III(2)IV(1) and megacomplex MCI(2)III(2)IV(2)). Found in a complex with TMEM177, COA6, COX18, COX20, SCO1 and SCO2. Interacts with TMEM177 in a COX20-dependent manner. Interacts with COX20. Interacts with COX16. Cu cation is required as a cofactor.

Its subcellular location is the mitochondrion inner membrane. The enzyme catalyses 4 Fe(II)-[cytochrome c] + O2 + 8 H(+)(in) = 4 Fe(III)-[cytochrome c] + 2 H2O + 4 H(+)(out). In terms of biological role, component of the cytochrome c oxidase, the last enzyme in the mitochondrial electron transport chain which drives oxidative phosphorylation. The respiratory chain contains 3 multisubunit complexes succinate dehydrogenase (complex II, CII), ubiquinol-cytochrome c oxidoreductase (cytochrome b-c1 complex, complex III, CIII) and cytochrome c oxidase (complex IV, CIV), that cooperate to transfer electrons derived from NADH and succinate to molecular oxygen, creating an electrochemical gradient over the inner membrane that drives transmembrane transport and the ATP synthase. Cytochrome c oxidase is the component of the respiratory chain that catalyzes the reduction of oxygen to water. Electrons originating from reduced cytochrome c in the intermembrane space (IMS) are transferred via the dinuclear copper A center (CU(A)) of subunit 2 and heme A of subunit 1 to the active site in subunit 1, a binuclear center (BNC) formed by heme A3 and copper B (CU(B)). The BNC reduces molecular oxygen to 2 water molecules using 4 electrons from cytochrome c in the IMS and 4 protons from the mitochondrial matrix. The sequence is that of Cytochrome c oxidase subunit 2 (MT-CO2) from Phoca vitulina (Harbor seal).